We begin with the raw amino-acid sequence, 192 residues long: Ion-translocating oxidoreductase complex subunit A (192 aa).

6 helical membrane passes run 5–25, 39–59, 63–83, 102–122, 134–154, and 171–191; these read FLLF…FLGL, VGMS…SYIV, ILLP…VIAV, LLGI…LALL, IIYG…FSSM, and SIAM…TGLI.

This sequence belongs to the NqrDE/RnfAE family. In terms of assembly, the complex is composed of six subunits: RnfA, RnfB, RnfC, RnfD, RnfE and RnfG.

Its subcellular location is the cell inner membrane. In terms of biological role, part of a membrane-bound complex that couples electron transfer with translocation of ions across the membrane. This is Ion-translocating oxidoreductase complex subunit A from Psychromonas ingrahamii (strain DSM 17664 / CCUG 51855 / 37).